The following is a 536-amino-acid chain: 2-isopropylmalate synthase (536 aa).

Residues 8-273 form the Pyruvate carboxyltransferase domain; it reads VLIFDTTLRD…FFGRDPESPT (266 aa). Mn(2+) is bound by residues aspartate 17, histidine 208, histidine 210, and asparagine 244. Positions 408–536 are regulatory domain; that stretch reads QLQLVQVSCG…PQHDLIKANL (129 aa).

It belongs to the alpha-IPM synthase/homocitrate synthase family. LeuA type 1 subfamily. Homodimer. It depends on Mn(2+) as a cofactor.

The protein localises to the cytoplasm. The enzyme catalyses 3-methyl-2-oxobutanoate + acetyl-CoA + H2O = (2S)-2-isopropylmalate + CoA + H(+). The protein operates within amino-acid biosynthesis; L-leucine biosynthesis; L-leucine from 3-methyl-2-oxobutanoate: step 1/4. Functionally, catalyzes the condensation of the acetyl group of acetyl-CoA with 3-methyl-2-oxobutanoate (2-ketoisovalerate) to form 3-carboxy-3-hydroxy-4-methylpentanoate (2-isopropylmalate). The sequence is that of 2-isopropylmalate synthase from Prochlorococcus marinus (strain MIT 9211).